Consider the following 245-residue polypeptide: Small ribosomal subunit protein uS2 (245 aa).

The disordered stretch occupies residues 226–245 (GGGANVGEMENPPVEATADA).

It belongs to the universal ribosomal protein uS2 family.

This is Small ribosomal subunit protein uS2 from Erythrobacter litoralis (strain HTCC2594).